The primary structure comprises 420 residues: 3-phosphoshikimate 1-carboxyvinyltransferase (420 aa).

The interval 1-24 (MTRTAKLTIIPPGRPLSGRAMPPG) is disordered. 3 residues coordinate 3-phosphoshikimate: Lys-26, Ser-27, and Arg-31. Lys-26 is a binding site for phosphoenolpyruvate. Residues Gly-97 and Arg-125 each coordinate phosphoenolpyruvate. Residues Ser-170, Ser-171, Gln-172, Asp-297, Asn-320, and Lys-324 each coordinate 3-phosphoshikimate. Gln-172 is a binding site for phosphoenolpyruvate. The Proton acceptor role is filled by Asp-297. Positions 328, 375, and 400 each coordinate phosphoenolpyruvate.

Belongs to the EPSP synthase family. In terms of assembly, monomer.

Its subcellular location is the cytoplasm. The enzyme catalyses 3-phosphoshikimate + phosphoenolpyruvate = 5-O-(1-carboxyvinyl)-3-phosphoshikimate + phosphate. It participates in metabolic intermediate biosynthesis; chorismate biosynthesis; chorismate from D-erythrose 4-phosphate and phosphoenolpyruvate: step 6/7. Catalyzes the transfer of the enolpyruvyl moiety of phosphoenolpyruvate (PEP) to the 5-hydroxyl of shikimate-3-phosphate (S3P) to produce enolpyruvyl shikimate-3-phosphate and inorganic phosphate. The protein is 3-phosphoshikimate 1-carboxyvinyltransferase of Rhizobium etli (strain CIAT 652).